The primary structure comprises 305 residues: MTSLCLTIAPAVLSLICLSSYGWAEGDTTDNEYLRFGRENNNGYIRFGRNDPFLRFGKKSDPFLRFGKQDPFLRIGRQDPFLRFGKQDPFLRFGKQDPFLRIGKQDPFLRFGRSEPYLRFGRNDPYLRFGRNDPYLRFGRNDPYLRFGRNDPYLRFGKNDPFLRFGKSVDGEIEAGVDAVTLSREHEFAHENAASDRQKRSAYTDAIDKDNSLTSLVREAREASDSNGQINDGKVVEVPVFRDTRNGHYMRFGKKNEVDVTDGDTYDRDYSDSDVSNLLRYYGNTVPLPAYDKRSEHKQEYMRFG.

Positions 1–19 are cleaved as a signal peptide; it reads MTSLCLTIAPAVLSLICLS. Phe36, Phe47, and Phe66 each carry phenylalanine amide. Residue Ile75 is modified to Isoleucine amide. 2 positions are modified to phenylalanine amide: Phe84 and Phe93. Residue Ile102 is modified to Isoleucine amide. Residues Phe111, Phe120, Phe129, Phe138, Phe147, Phe156, and Phe165 each carry the phenylalanine amide modification. Residues 168–305 constitute a propeptide that is removed on maturation; sequence SVDGEIEAGV…EHKQEYMRFG (138 aa).

Belongs to the FARP (FMRFamide related peptide) family. As to expression, central nervous system.

It localises to the secreted. In terms of biological role, can function as both cardioregulatory hormones and transmitters and may regulate cardiovascular function. This Cornu aspersum (Brown garden snail) protein is FMRFamide-related peptides type HF-4.